We begin with the raw amino-acid sequence, 256 residues long: MITLTTDFGLKGPYVGEMKVAMLRINPNAKIVDVTHSVTRHSILEGSFVMEQVVKYSPKGTVHVGVIDPGVGTERRAIVIEGDQYLVVPDNGLATLPLKHIKVKSVYEIIPDKIRKFTGWEISSTFHGRDIFGPAGALIEKGIHPEEFGREIPVDSIVKLNVEPRKEGDVWILKVIYIDDFGNVILNLENYEKPRTVELLDFNLRLPYLETYGLVEKGEMLALPGSHDYLEIAVNMGSAAERLNVKVGDELRVRLL.

Adenosine is bound by residues D7, H41, D68, and N183. Residues N183, Y212, S226, E231, V234, and M236 each coordinate (R)-S-adenosyl-L-methionine. An adenosine-binding site is contributed by V234.

The protein belongs to the SAM hydrolase / SAM-dependent halogenase family. In terms of assembly, homotrimer.

The catalysed reaction is (R)-S-adenosyl-L-methionine + H2O = adenosine + L-methionine + H(+). Its function is as follows. Catalyzes the hydrolysis of S-adenosyl-L-methionine (SAM) into adenosine and L-methionine. Is likely stereoselective, specifically hydrolyzing (R)-S-adenosyl-L-methionine ((R)-SAM), the inactive form of the ubiquitous cofactor SAM, and not the active form of SAM, (S)-S-adenosyl-L-methionine. Probaly plays a role in preventing accumulation of (R)-S-adenosyl-L-methionine in cells; maintenance of (S)-S-denosyl-L-methionine homochirality is important for cellular health given that the (R)-form is largely inactive as a methyl donor and can function as an inhibitor of methyltransferases. Is unable to mediate a fluorination or chlorination reaction with SAM. This Pyrococcus horikoshii (strain ATCC 700860 / DSM 12428 / JCM 9974 / NBRC 100139 / OT-3) protein is (R)-S-adenosyl-L-methionine hydrolase.